A 430-amino-acid polypeptide reads, in one-letter code: Acylsugar acyltransferase 3 (430 aa).

Active-site proton acceptor residues include histidine 155 and aspartate 367.

Belongs to the plant acyltransferase family. Monomer. As to expression, expressed in tip cells of type I trichomes of stems and petioles, sites of acylsugars production.

Functionally, catalyzes the transfer of short (four to five carbons) branched acyl chains to the furanose ring of di-acylsucrose acceptors to produce tri-acylsucroses such as S3:15 (5,5,5), S4:17 (2,5,5,5) and S4:24 (2,5,5,12) acylsucroses. The sequence is that of Acylsugar acyltransferase 3 from Solanum lycopersicum (Tomato).